The primary structure comprises 457 residues: Cysteine--tRNA ligase (457 aa).

Cys27 contributes to the Zn(2+) binding site. The short motif at 29–39 (PTVYDFAHIGN) is the 'HIGH' region element. The Zn(2+) site is built by Cys211, His236, and Glu240. Positions 269–273 (KMSKS) match the 'KMSKS' region motif. Lys272 lines the ATP pocket.

The protein belongs to the class-I aminoacyl-tRNA synthetase family. As to quaternary structure, monomer. The cofactor is Zn(2+).

It is found in the cytoplasm. The enzyme catalyses tRNA(Cys) + L-cysteine + ATP = L-cysteinyl-tRNA(Cys) + AMP + diphosphate. The chain is Cysteine--tRNA ligase from Ehrlichia ruminantium (strain Welgevonden).